The chain runs to 22 residues: Chitin-binding protein 3 (22 aa).

Glycosylated; contains 2.5% carbohydrates.

Functionally, chitin-binding protein. Has antifungal activity against F.solani, F.oxysporum, C.musae and C.gloesporoides but not against P.oligandrum. Depending on concentration the antifungal activity can be fungistatic or fungicidal. Inhibits both spore germination and mycelial growth in F.solani at a concentration of 0.1 mg/ml. Has antifungal activity against C.krusei, C.albicans, C.tropicalis and C.parapsilosis. Has no chitinase, beta-glucanase or hemagglutinating activity. Acts as a flocculent. The chain is Chitin-binding protein 3 from Moringa oleifera (Horseradish tree).